The chain runs to 843 residues: Eisosome protein 1 (843 aa).

N-acetylserine is present on S2. At S2 the chain carries Phosphoserine. The disordered stretch occupies residues 13-44; it reads HNIGKTSGGGSRTSSITSSKKSLKHGSKSLRK. The span at 33 to 44 shows a compositional bias: basic residues; it reads KSLKHGSKSLRK. A phosphoserine mark is found at S88 and S130. Residues 120–174 form a disordered region; it reads KMGPKVVRNNSITSATSKTSKESQTKRKSKESPGAAASKAYSMTMETTSLSSQTN. Polar residues-rich tracts occupy residues 127-137 and 163-174; these read RNNSITSATSK and TMETTSLSSQTN. S182, S401, S584, and S710 each carry phosphoserine. Residues 717-843 form a disordered region; the sequence is DLPTQLEKIE…QDAISNQEKK (127 aa). T720 is modified (phosphothreonine). The segment covering 752–764 has biased composition (low complexity); it reads STAAKEATETSSA. Phosphoserine is present on residues S763 and S775. Positions 781 to 797 are enriched in basic and acidic residues; sequence SGKEDANDCKSAEHSKE. Polar residues predominate over residues 798–810; that stretch reads ISVSQKAGNNKSL. 4 positions are modified to phosphoserine: S816, S828, S829, and S838.

It belongs to the EIS1 family.

The protein localises to the cytoplasmic granule. Its subcellular location is the cell membrane. Functionally, required for normal formation of eisosomes, large cytoplasmic protein assemblies that localize to specialized domains on plasma membrane and mark the site of endocytosis. The sequence is that of Eisosome protein 1 (EIS1) from Saccharomyces cerevisiae (strain Lalvin EC1118 / Prise de mousse) (Baker's yeast).